Here is a 259-residue protein sequence, read N- to C-terminus: UPF0246 protein VFMJ11_2214 (259 aa).

The protein belongs to the UPF0246 family.

The polypeptide is UPF0246 protein VFMJ11_2214 (Aliivibrio fischeri (strain MJ11) (Vibrio fischeri)).